The following is a 64-amino-acid chain: Large ribosomal subunit protein eL37 (64 aa).

Zn(2+) contacts are provided by Cys20, Cys23, Cys35, and Cys38. Residues 20-38 (CRRCGRRSFHVRKKVCAAC) form a C4-type zinc finger.

It belongs to the eukaryotic ribosomal protein eL37 family. Zn(2+) is required as a cofactor.

Binds to the 23S rRNA. The sequence is that of Large ribosomal subunit protein eL37 from Methanococcus maripaludis (strain C5 / ATCC BAA-1333).